A 310-amino-acid chain; its full sequence is Basic salivary proline-rich protein 4 (310 aa).

The signal sequence occupies residues 1–16 (MLLILLSVALLALSSA). Residues 14–310 (SSAESSSEDV…RPAQGQQPPQ (297 aa)) are disordered. 9 consecutive repeat copies span residues 35–55 (KPEG…PPPG), 56–76 (KPQG…PPPG), 77–97 (KPEG…PHPG), 98–118 (KPER…PHPG), 119–139 (KPES…PTPG), 140–160 (KPEG…PPPG), 161–181 (KPEG…PHPG), 182–202 (KPER…PPPG), and 203–223 (KPER…PHPG). The interval 35-234 (KPEGRRPQGG…PEGPPPQEGN (200 aa)) is 9.5 X 21 AA tandem repeats of K-P-[EQ]-[GR]-[PR]-[PR]-P-Q-G-G-N-Q-[PS]-[QH]-[RG]-[PT]-P-P-[PH]-P-G. The segment covering 48–63 (QRPPPPPGKPQGPPPQ) has biased composition (pro residues). 3 N-linked (GlcNAc...) asparagine glycosylation sites follow: asparagine 66, asparagine 87, and asparagine 108. A compositionally biased stretch (pro residues) spans 133-147 (GPPPTPGKPEGPPPQ). Asparagine 150, asparagine 171, and asparagine 192 each carry an N-linked (GlcNAc...) asparagine glycan. The segment covering 196–210 (RPPPPPGKPERPPPQ) has biased composition (pro residues). Residue asparagine 213 is glycosylated (N-linked (GlcNAc...) asparagine). Over residues 217-231 (GPPPHPGKPEGPPPQ) the composition is skewed to pro residues. One copy of the 10; truncated repeat lies at 224 to 234 (KPEGPPPQEGN). N-linked (GlcNAc...) asparagine glycosylation occurs at asparagine 234. The span at 258-310 (QGPPPPGKPQGPPPAGGNPQQPQAPPAGKPQGPPPPPQGGRPPRPAQGQQPPQ) shows a compositional bias: pro residues.

Post-translationally, N-glycosylated. In terms of processing, proteolytically cleaved at the tripeptide Xaa-Pro-Gln, where Xaa in the P(3) position is mostly lysine. The endoprotease may be of microbial origin. Pyroglutamate formation found on at least Gln-46, Gln-48, Gln-67, Gln-88; Gln-90; Gln-193; Gln-288 Gln-214 and Gln-295, preferentially in diabetic, and head and neck cancer patients.

Its subcellular location is the secreted. The protein is Basic salivary proline-rich protein 4 (PRB4) of Homo sapiens (Human).